The sequence spans 226 residues: UPF0758 protein gbs1168 (226 aa).

Residues 103–225 (QILSSEQLAR…YYSFREEADI (123 aa)) form the MPN domain. The Zn(2+) site is built by His-174, His-176, and Asp-187. The JAMM motif motif lies at 174 to 187 (HNHPSGSPNPSESD).

The protein belongs to the UPF0758 family.

The protein is UPF0758 protein gbs1168 of Streptococcus agalactiae serotype III (strain NEM316).